The chain runs to 470 residues: 6-phospho-beta-galactosidase (470 aa).

D-galactose 6-phosphate is bound by residues Q19, H116, N159, E160, and N297. Residue E160 is the Proton donor of the active site. Catalysis depends on E375, which acts as the Nucleophile. The D-galactose 6-phosphate site is built by S430, W431, K437, and Y439.

The protein belongs to the glycosyl hydrolase 1 family.

It catalyses the reaction a 6-phospho-beta-D-galactoside + H2O = D-galactose 6-phosphate + an alcohol. It functions in the pathway carbohydrate metabolism; lactose degradation; D-galactose 6-phosphate and beta-D-glucose from lactose 6-phosphate: step 1/1. This is 6-phospho-beta-galactosidase from Staphylococcus aureus (strain Mu3 / ATCC 700698).